Here is a 211-residue protein sequence, read N- to C-terminus: Interleukin-6 (211 aa).

The first 29 residues, 1–29 (MNSLSTSAFSPVAFSLGLLLVMATAFPTP), serve as a signal peptide directing secretion. A disulfide bridge links Cys-71 with Cys-77. Ser-80 carries the phosphoserine modification. The cysteines at positions 100 and 110 are disulfide-linked.

This sequence belongs to the IL-6 superfamily. In terms of assembly, component of a hexamer of two molecules each of IL6, IL6R and IL6ST; first binds to IL6R to associate with the signaling subunit IL6ST. Interacts with IL6R (via the N-terminal ectodomain); this interaction may be affected by IL6R-binding with SORL1, hence decreasing IL6 cis signaling. Interacts with SORL1 (via the N-terminal ectodomain); this interaction leads to IL6 internalization and lysosomal degradation. May form a trimeric complex with the soluble SORL1 ectodomain and soluble IL6R receptor; this interaction might stabilize circulating IL6, hence promoting IL6 trans signaling.

It localises to the secreted. Cytokine with a wide variety of biological functions in immunity, tissue regeneration, and metabolism. Binds to IL6R, then the complex associates to the signaling subunit IL6ST/gp130 to trigger the intracellular IL6-signaling pathway. The interaction with the membrane-bound IL6R and IL6ST stimulates 'classic signaling', whereas the binding of IL6 and soluble IL6R to IL6ST stimulates 'trans-signaling'. Alternatively, 'cluster signaling' occurs when membrane-bound IL6:IL6R complexes on transmitter cells activate IL6ST receptors on neighboring receiver cells. In terms of biological role, IL6 is a potent inducer of the acute phase response. Rapid production of IL6 contributes to host defense during infection and tissue injury, but excessive IL6 synthesis is involved in disease pathology. In the innate immune response, is synthesized by myeloid cells, such as macrophages and dendritic cells, upon recognition of pathogens through toll-like receptors (TLRs) at the site of infection or tissue injury. In the adaptive immune response, is required for the differentiation of B cells into immunoglobulin-secreting cells. Plays a major role in the differentiation of CD4(+) T cell subsets. Essential factor for the development of T follicular helper (Tfh) cells that are required for the induction of germinal-center formation. Required to drive naive CD4(+) T cells to the Th17 lineage. Also required for proliferation of myeloma cells and the survival of plasmablast cells. Its function is as follows. Acts as an essential factor in bone homeostasis and on vessels directly or indirectly by induction of VEGF, resulting in increased angiogenesis activity and vascular permeability. Induces, through 'trans-signaling' and synergistically with IL1B and TNF, the production of VEGF. Involved in metabolic controls, is discharged into the bloodstream after muscle contraction increasing lipolysis and improving insulin resistance. 'Trans-signaling' in central nervous system also regulates energy and glucose homeostasis. Mediates, through GLP-1, crosstalk between insulin-sensitive tissues, intestinal L cells and pancreatic islets to adapt to changes in insulin demand. Also acts as a myokine. Plays a protective role during liver injury, being required for maintenance of tissue regeneration. Also has a pivotal role in iron metabolism by regulating HAMP/hepcidin expression upon inflammation or bacterial infection. Through activation of IL6ST-YAP-NOTCH pathway, induces inflammation-induced epithelial regeneration. In Camelus bactrianus (Bactrian camel), this protein is Interleukin-6 (IL6).